Here is a 172-residue protein sequence, read N- to C-terminus: MDLRKKIRIVENFPIEGISFKDVTPILKDPKAMKHTTKEIAKYLEDKNVDVVVGPEARGFLFGVPVAHELDIGFVPVRKPGKLPYKTFSVDYALEYGSDSLEIHSDGIEKGQNVAIVDDLLATGGTVLGVSKLVEKLGGHVSALNFVIELTELKGRDKLKGYDIQSLVKYDL.

Belongs to the purine/pyrimidine phosphoribosyltransferase family. In terms of assembly, homodimer.

The protein localises to the cytoplasm. It catalyses the reaction AMP + diphosphate = 5-phospho-alpha-D-ribose 1-diphosphate + adenine. It participates in purine metabolism; AMP biosynthesis via salvage pathway; AMP from adenine: step 1/1. Its function is as follows. Catalyzes a salvage reaction resulting in the formation of AMP, that is energically less costly than de novo synthesis. This is Adenine phosphoribosyltransferase from Methanococcus maripaludis (strain DSM 14266 / JCM 13030 / NBRC 101832 / S2 / LL).